The chain runs to 151 residues: Multiprotein-bridging factor 1 (151 aa).

Positions 1 to 31 (MSDWESHTVIGQKARAGGSGPRANVARTQGQ) are disordered. Positions 85 to 139 (IARVRTEKKMSQKDLATKINEKPTVINDYEAGRAIPNQQVLGKMERALGVKLRGK) constitute an HTH cro/C1-type domain. Residues 96–115 (QKDLATKINEKPTVINDYEA) constitute a DNA-binding region (H-T-H motif).

This sequence belongs to the MBF1 family.

Functionally, transcriptional coactivator that stimulates GCN4-dependent transcriptional activity by bridging the DNA-binding region of GCN4 and TBP (SPT15), thereby recruiting TBP to GCN4-bound promoters. Involved in induction of the ribosome quality control (RQC) pathway; a pathway that degrades nascent peptide chains during problematic translation. Required to prevent stalled ribosomes from frameshifting. The protein is Multiprotein-bridging factor 1 (MBF1) of Candida glabrata (strain ATCC 2001 / BCRC 20586 / JCM 3761 / NBRC 0622 / NRRL Y-65 / CBS 138) (Yeast).